The chain runs to 165 residues: Lipoprotein signal peptidase (165 aa).

3 consecutive transmembrane segments (helical) span residues 9–29 (SFLW…YFVV), 65–85 (WQKY…CYFL), and 100–120 (ALII…GFVV). Catalysis depends on residues Asp-121 and Asp-139. The helical transmembrane segment at 134–154 (VFNVADIAISLGAGLMILDAF) threads the bilayer.

It belongs to the peptidase A8 family.

It is found in the cell inner membrane. The catalysed reaction is Release of signal peptides from bacterial membrane prolipoproteins. Hydrolyzes -Xaa-Yaa-Zaa-|-(S,diacylglyceryl)Cys-, in which Xaa is hydrophobic (preferably Leu), and Yaa (Ala or Ser) and Zaa (Gly or Ala) have small, neutral side chains.. It participates in protein modification; lipoprotein biosynthesis (signal peptide cleavage). Functionally, this protein specifically catalyzes the removal of signal peptides from prolipoproteins. The sequence is that of Lipoprotein signal peptidase from Pasteurella multocida (strain Pm70).